We begin with the raw amino-acid sequence, 552 residues long: DNA ligase (552 aa).

An ATP-binding site is contributed by Glu244. Lys246 (N6-AMP-lysine intermediate) is an active-site residue. Positions 251, 266, 296, 336, 408, and 414 each coordinate ATP.

Belongs to the ATP-dependent DNA ligase family. Mg(2+) is required as a cofactor.

The enzyme catalyses ATP + (deoxyribonucleotide)n-3'-hydroxyl + 5'-phospho-(deoxyribonucleotide)m = (deoxyribonucleotide)n+m + AMP + diphosphate.. Functionally, DNA ligase that seals nicks in double-stranded DNA during DNA replication, DNA recombination and DNA repair. The protein is DNA ligase of Methanothrix thermoacetophila (strain DSM 6194 / JCM 14653 / NBRC 101360 / PT) (Methanosaeta thermophila).